The chain runs to 98 residues: Cystatin-B (98 aa).

The region spanning 4–83 (GGTSQPVDAD…PCNGETLELS (80 aa)) is the Cystatin domain. A Secondary area of contact motif is present at residues 46-50 (QCVPG).

The protein belongs to the cystatin family. In terms of tissue distribution, ubiquitously expressed in normal and lipopolysaccharide (LPS)-stimulated tissues including brain, eye, gullet, heart, liver, muscle, stomach, kidney, spleen, pyloric ceca, intestine and gill.

The protein resides in the cytoplasm. Its activity is regulated as follows. Greatly decreased inhibitory activity against papain protease by metal ions including ZnSO(4), CuSO(4), HgCl(2) and CoCl(2). Decreased inhibitory activity against papain protease by detergents including Tween 20, SDS and Brij 35. In terms of biological role, thiol protease inhibitor. Has high papain, bovine cathepsin B and fish cathepsins F and X inhibitory activity and inhibits fish cathepsins L, S and K to a lesser extent in vitro. May be involved in innate immunity. This chain is Cystatin-B, found in Paralichthys olivaceus (Bastard halibut).